Consider the following 234-residue polypeptide: MRYITVEDLSFYYDKEPVLEHINYCVDSGEFVTLTGENGAAKTTLIKASLGILQPRIGKVAISKTNTQGKKLRIAYLPQQIASFNAGFPSTVYEFVKSGRYPRKGWFRRLNAHDEEHIKASLDSVGMWEHRDKRLGSLSGGQKQRAVIARMFASDPDVFILDEPTTGMDAGSKNEFYELMHHSAHHHGKAVLMITHDPEEVKDYADRNIHLVRNQDSPWRCFNVHENGQEVGHA.

The ABC transporter domain occupies 4-234 (ITVEDLSFYY…HENGQEVGHA (231 aa)). Residue 36-43 (GENGAAKT) participates in ATP binding.

Belongs to the ABC transporter superfamily.

Part of the ATP-driven transport system AdcABC for zinc. Required for transformability. The protein is Zinc transport system ATP-binding protein AdcC (adcC) of Streptococcus pneumoniae (strain ATCC BAA-255 / R6).